A 748-amino-acid polypeptide reads, in one-letter code: Transducin-like enhancer protein 4 (748 aa).

2 disordered regions span residues 1–20 and 157–332; these read MIRD…PHQP and LPIK…DPLA. The interval 1-112 is q domain; sequence MIRDLSKMYR…SQEQQQLQAQ (112 aa). Residues 113–179 form a GP domain region; the sequence is HLLTWTWSAC…HQRDRDSIKS (67 aa). Basic and acidic residues predominate over residues 158–177; that stretch reads PIKDEKKHHDNDHQRDRDSI. Over residues 178–189 the composition is skewed to low complexity; that stretch reads KSSSVSPSASFR. Residues 180-249 are ccN domain; that stretch reads SSVSPSASFR…SPRGSPAHSP (70 aa). Phosphoserine occurs at positions 183, 187, 191, and 197. Over residues 190–227 the composition is skewed to basic and acidic residues; that stretch reads GSEKHRNSTDYSSESKKQKTEEKEIAARYDSDGEKSDD. An N6-acetyllysine modification is found at Lys-212. A Phosphoserine modification is found at Ser-220. Position 225 is a phosphoserine; by CK2 (Ser-225). At Ser-240 the chain carries Phosphoserine; by CDK1. 2 positions are modified to phosphoserine: Ser-244 and Ser-248. Over residues 248-264 the composition is skewed to basic and acidic residues; that stretch reads SPRENGLDKTRLLKKDA. An SP domain region spans residues 250-427; sequence RENGLDKTRL…PGGKPAYSFH (178 aa). Lys-256 carries the N6-acetyllysine modification. Low complexity predominate over residues 265-280; the sequence is PISPASVASSSSTPSS. Ser-267 carries the phosphoserine modification. Residues 292-303 are compositionally biased toward polar residues; that stretch reads TTPVSKSNTPTP. Thr-293 bears the Phosphothreonine mark. 2 positions are modified to phosphoserine: Ser-296 and Ser-298. Phosphothreonine is present on residues Thr-300, Thr-302, Thr-309, and Thr-315. Residue Ser-394 is modified to Phosphoserine. 7 WD repeats span residues 460 to 498, 506 to 545, 550 to 589, 592 to 631, 633 to 672, 674 to 713, and 715 to 748; these read NHGE…NKSP, NRDN…PRIK, SSAP…LVRQ, GHTD…QLQQ, DFTS…KYQL, LHES…SIFQ, and KESS…EVIY.

Belongs to the WD repeat Groucho/TLE family. In terms of assembly, homooligomer and heterooligomer with other family members. Binds PAX5, LEF1, TCF7, TCF7L1 and TCF7L2. Interacts with ZNF703; TLE4 may mediate ZNF703 transcriptional repression. Interacts with SIX3 and SIX6. Interacts with PAX2. Post-translationally, phosphorylated. PAX5 binding increases phosphorylation. In terms of processing, ubiquitinated by XIAP/BIRC4.

It localises to the nucleus. In terms of biological role, transcriptional corepressor that binds to a number of transcription factors. Inhibits the transcriptional activation mediated by PAX5, and by CTNNB1 and TCF family members in Wnt signaling. The effects of full-length TLE family members may be modulated by association with dominant-negative AES. Essential for the transcriptional repressor activity of SIX3 during retina and lens development and for SIX3 transcriptional auto-repression. Involved in transcriptional repression of GNRHR and enhances MSX1-mediated transcriptional repression of CGA/alpha-GSU. The sequence is that of Transducin-like enhancer protein 4 (Tle4) from Rattus norvegicus (Rat).